We begin with the raw amino-acid sequence, 338 residues long: MNCLYQRDCLRLLDFTTAELKHIITLSEKLKKTKQNRQEIKLLKQKNIALIFEKESTRTRCSFEVAAFDQGANVTYLGPGSTHLGTKESIEDTARVLSRLYDGIQYRGHNHKTIEILAQYSTVPVWNGLTEKFHPTQLIADLLTIKEIFPNRNFSDIKCAYVGDSRNNIGNSLLEAASIVGLNLYLVSPKQYWPEKNLFIECKKIIKKNQGNIICTENISEGVKNADFIYTDVWVSMGEHHKIWKERIELLKNYQVNDSMIKMTNNSKVKILHCLPALHDQKTSIGKSILKKYGLKDGMEITDNIFQKHQKTIFEQAENRLHTIKALLVSSLIKEMNF.

Carbamoyl phosphate contacts are provided by residues 56 to 59 (STRT), Arg107, and 134 to 137 (HPTQ). Residues Asn168, Asp232, and 236–237 (SM) each bind L-ornithine. Residues 274–275 (CL) and Arg320 contribute to the carbamoyl phosphate site.

The protein belongs to the aspartate/ornithine carbamoyltransferase superfamily. OTCase family.

The protein resides in the cytoplasm. It carries out the reaction carbamoyl phosphate + L-ornithine = L-citrulline + phosphate + H(+). It participates in amino-acid biosynthesis; L-arginine biosynthesis; L-arginine from L-ornithine and carbamoyl phosphate: step 1/3. In terms of biological role, reversibly catalyzes the transfer of the carbamoyl group from carbamoyl phosphate (CP) to the N(epsilon) atom of ornithine (ORN) to produce L-citrulline. This Buchnera aphidicola subsp. Schizaphis graminum (strain Sg) protein is Ornithine carbamoyltransferase (argI).